The following is a 346-amino-acid chain: Uroporphyrinogen decarboxylase (346 aa).

Residues 21–25, phenylalanine 40, aspartate 71, tyrosine 146, serine 201, and histidine 316 contribute to the substrate site; that span reads RQAGR.

This sequence belongs to the uroporphyrinogen decarboxylase family. As to quaternary structure, homodimer.

The protein localises to the cytoplasm. The catalysed reaction is uroporphyrinogen III + 4 H(+) = coproporphyrinogen III + 4 CO2. It participates in porphyrin-containing compound metabolism; protoporphyrin-IX biosynthesis; coproporphyrinogen-III from 5-aminolevulinate: step 4/4. Functionally, catalyzes the decarboxylation of four acetate groups of uroporphyrinogen-III to yield coproporphyrinogen-III. This chain is Uroporphyrinogen decarboxylase, found in Rickettsia felis (strain ATCC VR-1525 / URRWXCal2) (Rickettsia azadi).